Reading from the N-terminus, the 269-residue chain is tRNA pseudouridine synthase A (269 aa).

The active-site Nucleophile is aspartate 51. Tyrosine 109 contacts substrate.

This sequence belongs to the tRNA pseudouridine synthase TruA family. In terms of assembly, homodimer.

It carries out the reaction uridine(38/39/40) in tRNA = pseudouridine(38/39/40) in tRNA. Its function is as follows. Formation of pseudouridine at positions 38, 39 and 40 in the anticodon stem and loop of transfer RNAs. This chain is tRNA pseudouridine synthase A, found in Haemophilus influenzae (strain PittGG).